The chain runs to 468 residues: Siroheme synthase 1 (468 aa).

The precorrin-2 dehydrogenase /sirohydrochlorin ferrochelatase stretch occupies residues 1 to 204 (MDYLPIFCRL…GDKASANQLA (204 aa)). NAD(+) is bound by residues 22–23 (EV) and 43–44 (PA). Ser128 bears the Phosphoserine mark. The segment at 216–468 (GEVILVGAGP…NHGVQAAALA (253 aa)) is uroporphyrinogen-III C-methyltransferase. Pro225 serves as a coordination point for S-adenosyl-L-methionine. The active-site Proton acceptor is the Asp248. The Proton donor role is filled by Lys270. S-adenosyl-L-methionine-binding positions include 301 to 303 (GGD), Ile306, 331 to 332 (TA), Met383, and Gly412.

It in the N-terminal section; belongs to the precorrin-2 dehydrogenase / sirohydrochlorin ferrochelatase family. The protein in the C-terminal section; belongs to the precorrin methyltransferase family.

The enzyme catalyses uroporphyrinogen III + 2 S-adenosyl-L-methionine = precorrin-2 + 2 S-adenosyl-L-homocysteine + H(+). The catalysed reaction is precorrin-2 + NAD(+) = sirohydrochlorin + NADH + 2 H(+). It carries out the reaction siroheme + 2 H(+) = sirohydrochlorin + Fe(2+). Its pathway is cofactor biosynthesis; adenosylcobalamin biosynthesis; precorrin-2 from uroporphyrinogen III: step 1/1. The protein operates within cofactor biosynthesis; adenosylcobalamin biosynthesis; sirohydrochlorin from precorrin-2: step 1/1. It functions in the pathway porphyrin-containing compound metabolism; siroheme biosynthesis; precorrin-2 from uroporphyrinogen III: step 1/1. It participates in porphyrin-containing compound metabolism; siroheme biosynthesis; siroheme from sirohydrochlorin: step 1/1. Its pathway is porphyrin-containing compound metabolism; siroheme biosynthesis; sirohydrochlorin from precorrin-2: step 1/1. Its function is as follows. Multifunctional enzyme that catalyzes the SAM-dependent methylations of uroporphyrinogen III at position C-2 and C-7 to form precorrin-2 via precorrin-1. Then it catalyzes the NAD-dependent ring dehydrogenation of precorrin-2 to yield sirohydrochlorin. Finally, it catalyzes the ferrochelation of sirohydrochlorin to yield siroheme. This is Siroheme synthase 1 from Aeromonas salmonicida (strain A449).